The chain runs to 160 residues: Phosphopantetheine adenylyltransferase (160 aa).

Ser-10 lines the substrate pocket. ATP contacts are provided by residues Ser-10–Phe-11 and His-18. Substrate contacts are provided by Lys-42, Leu-74, and Arg-88. Residues Gly-89–Arg-91, Glu-99, and Tyr-124–Ser-130 each bind ATP.

It belongs to the bacterial CoaD family. In terms of assembly, homohexamer. The cofactor is Mg(2+).

It localises to the cytoplasm. It carries out the reaction (R)-4'-phosphopantetheine + ATP + H(+) = 3'-dephospho-CoA + diphosphate. The protein operates within cofactor biosynthesis; coenzyme A biosynthesis; CoA from (R)-pantothenate: step 4/5. Its function is as follows. Reversibly transfers an adenylyl group from ATP to 4'-phosphopantetheine, yielding dephospho-CoA (dPCoA) and pyrophosphate. The polypeptide is Phosphopantetheine adenylyltransferase (Bacillus velezensis (strain DSM 23117 / BGSC 10A6 / LMG 26770 / FZB42) (Bacillus amyloliquefaciens subsp. plantarum)).